Reading from the N-terminus, the 152-residue chain is Transcriptional repressor NrdR (152 aa).

A zinc finger lies at 3 to 34 (CPSCQHNGTRVLDSRPVDDGKSIRRRRECESC). Positions 49 to 139 (LIVVKKEGVR…VYRQFKDINV (91 aa)) constitute an ATP-cone domain.

It belongs to the NrdR family. Zn(2+) serves as cofactor.

Functionally, negatively regulates transcription of bacterial ribonucleotide reductase nrd genes and operons by binding to NrdR-boxes. This is Transcriptional repressor NrdR from Bacillus subtilis (strain 168).